Reading from the N-terminus, the 122-residue chain is Large ribosomal subunit protein uL14 (122 aa).

Belongs to the universal ribosomal protein uL14 family. As to quaternary structure, part of the 50S ribosomal subunit. Forms a cluster with proteins L3 and L19. In the 70S ribosome, L14 and L19 interact and together make contacts with the 16S rRNA in bridges B5 and B8.

Its function is as follows. Binds to 23S rRNA. Forms part of two intersubunit bridges in the 70S ribosome. The chain is Large ribosomal subunit protein uL14 from Bifidobacterium animalis subsp. lactis (strain AD011).